Consider the following 150-residue polypeptide: T-complex protein 1 subunit beta (150 aa).

Residue Asp-35 coordinates Mg(2+). The ADP site is built by Gly-36, Thr-37, Thr-38, and Ser-39. ATP contacts are provided by Gly-36, Thr-37, and Thr-38.

It belongs to the TCP-1 chaperonin family. As to quaternary structure, component of the chaperonin-containing T-complex (TRiC), a hexadecamer composed of two identical back-to-back stacked rings enclosing a protein folding chamber. Each ring is made up of eight different subunits: TCP1/CCT1, CCT2, CCT3, CCT4, CCT5, CCT6A/CCT6, CCT7, CCT8. Interacts with PACRG. Interacts with FLCN. Interacts with DLEC1. Interacts with SVEP1.

It is found in the cytoplasm. It catalyses the reaction ATP + H2O = ADP + phosphate + H(+). In terms of biological role, component of the chaperonin-containing T-complex (TRiC), a molecular chaperone complex that assists the folding of actin, tubulin and other proteins upon ATP hydrolysis. The TRiC complex mediates the folding of WRAP53/TCAB1, thereby regulating telomere maintenance. As part of the TRiC complex may play a role in the assembly of BBSome, a complex involved in ciliogenesis regulating transports vesicles to the cilia. This is T-complex protein 1 subunit beta from Mesocricetus auratus (Golden hamster).